Reading from the N-terminus, the 165-residue chain is Phosphopantetheine adenylyltransferase (165 aa).

S10 is a substrate binding site. ATP contacts are provided by residues 10 to 11 and H18; that span reads SF. 3 residues coordinate substrate: K42, T79, and R93. ATP-binding positions include 94-96, E104, and 129-135; these read GLR and VRPITAT.

Belongs to the bacterial CoaD family. As to quaternary structure, homohexamer. Requires Mg(2+) as cofactor.

Its subcellular location is the cytoplasm. It carries out the reaction (R)-4'-phosphopantetheine + ATP + H(+) = 3'-dephospho-CoA + diphosphate. Its pathway is cofactor biosynthesis; coenzyme A biosynthesis; CoA from (R)-pantothenate: step 4/5. Its function is as follows. Reversibly transfers an adenylyl group from ATP to 4'-phosphopantetheine, yielding dephospho-CoA (dPCoA) and pyrophosphate. In Nitrobacter winogradskyi (strain ATCC 25391 / DSM 10237 / CIP 104748 / NCIMB 11846 / Nb-255), this protein is Phosphopantetheine adenylyltransferase.